Consider the following 90-residue polypeptide: Large ribosomal subunit protein bL27 (90 aa).

This sequence belongs to the bacterial ribosomal protein bL27 family.

This is Large ribosomal subunit protein bL27 from Paracoccus denitrificans (strain Pd 1222).